The following is a 347-amino-acid chain: Probable dual-specificity RNA methyltransferase RlmN (347 aa).

Catalysis depends on E94, which acts as the Proton acceptor. Residues 100–334 (TETRTTACVS…AKVRHSRGKD (235 aa)) enclose the Radical SAM core domain. C107 and C339 are disulfide-bonded. Residues C114, C118, and C121 each contribute to the [4Fe-4S] cluster site. S-adenosyl-L-methionine-binding positions include 165 to 166 (GE), S197, 220 to 222 (SLH), and N296. Residue C339 is the S-methylcysteine intermediate of the active site.

It belongs to the radical SAM superfamily. RlmN family. The cofactor is [4Fe-4S] cluster.

It localises to the cytoplasm. It catalyses the reaction adenosine(2503) in 23S rRNA + 2 reduced [2Fe-2S]-[ferredoxin] + 2 S-adenosyl-L-methionine = 2-methyladenosine(2503) in 23S rRNA + 5'-deoxyadenosine + L-methionine + 2 oxidized [2Fe-2S]-[ferredoxin] + S-adenosyl-L-homocysteine. The catalysed reaction is adenosine(37) in tRNA + 2 reduced [2Fe-2S]-[ferredoxin] + 2 S-adenosyl-L-methionine = 2-methyladenosine(37) in tRNA + 5'-deoxyadenosine + L-methionine + 2 oxidized [2Fe-2S]-[ferredoxin] + S-adenosyl-L-homocysteine. Its function is as follows. Specifically methylates position 2 of adenine 2503 in 23S rRNA and position 2 of adenine 37 in tRNAs. The protein is Probable dual-specificity RNA methyltransferase RlmN of Flavobacterium psychrophilum (strain ATCC 49511 / DSM 21280 / CIP 103535 / JIP02/86).